The following is a 62-amino-acid chain: UPF0434 protein BP2767 (62 aa).

It belongs to the UPF0434 family.

In Bordetella pertussis (strain Tohama I / ATCC BAA-589 / NCTC 13251), this protein is UPF0434 protein BP2767.